The sequence spans 87 residues: MNSLLMITACLVLFGTVWAKEGYLVNKSTGCKYGCFWLGKNEGCDKECKAKNQGGSYGYCYAFGCWCEGLPESTPTYPLPNKTCSKK.

Residues 1–19 (MNSLLMITACLVLFGTVWA) form the signal peptide. One can recognise an LCN-type CS-alpha/beta domain in the interval 20 to 85 (KEGYLVNKST…TYPLPNKTCS (66 aa)). Intrachain disulfides connect C31-C84, C35-C60, C44-C65, and C48-C67.

The protein belongs to the long (4 C-C) scorpion toxin superfamily. Sodium channel inhibitor family. Beta subfamily. Expressed by the venom gland.

Its subcellular location is the secreted. Its function is as follows. Beta toxins bind voltage-independently at site-4 of sodium channels (Nav) and shift the voltage of activation toward more negative potentials thereby affecting sodium channel activation and promoting spontaneous and repetitive firing. The chain is Toxin CngtIII from Centruroides noxius (Mexican scorpion).